Here is a 101-residue protein sequence, read N- to C-terminus: Apolipoprotein C-II (101 aa).

Positions 1–22 (MGIRYLLVLVLVLLVLGCEVQG) are cleaved as a signal peptide. The lipid binding stretch occupies residues 66-74 (TMDEKIREI). A lipoprotein lipase cofactor region spans residues 78–101 (STAAVSTYAGIFTDQLLSMLKGDQ).

This sequence belongs to the apolipoprotein C2 family. Post-translationally, proapolipoprotein C-II is synthesized as a sialic acid containing glycoprotein which is subsequently desialylated prior to its proteolytic processing. Proapolipoprotein C-II, the major form found in plasma undergoes proteolytic cleavage of its N-terminal hexapeptide to generate apolipoprotein C-II, which occurs as the minor form in plasma.

It is found in the secreted. Functionally, component of chylomicrons, very low-density lipoproteins (VLDL), low-density lipoproteins (LDL), and high-density lipoproteins (HDL) in plasma. Plays an important role in lipoprotein metabolism as an activator of lipoprotein lipase. Both proapolipoprotein C-II and apolipoprotein C-II can activate lipoprotein lipase. The sequence is that of Apolipoprotein C-II (APOC2) from Phoca vitulina (Harbor seal).